A 362-amino-acid polypeptide reads, in one-letter code: Chorismate synthase (362 aa).

R46 provides a ligand contact to NADP(+). Residues 122-124, 238-239, G278, 293-297, and R319 each bind FMN; these read RSS, NA, and KPTPS.

Belongs to the chorismate synthase family. As to quaternary structure, homotetramer. Requires FMNH2 as cofactor.

It catalyses the reaction 5-O-(1-carboxyvinyl)-3-phosphoshikimate = chorismate + phosphate. The protein operates within metabolic intermediate biosynthesis; chorismate biosynthesis; chorismate from D-erythrose 4-phosphate and phosphoenolpyruvate: step 7/7. Its function is as follows. Catalyzes the anti-1,4-elimination of the C-3 phosphate and the C-6 proR hydrogen from 5-enolpyruvylshikimate-3-phosphate (EPSP) to yield chorismate, which is the branch point compound that serves as the starting substrate for the three terminal pathways of aromatic amino acid biosynthesis. This reaction introduces a second double bond into the aromatic ring system. This is Chorismate synthase from Campylobacter jejuni (strain RM1221).